Consider the following 290-residue polypeptide: Light-independent protochlorophyllide reductase iron-sulfur ATP-binding protein (290 aa).

Residues 10-15 (GIGKST) and Lys39 contribute to the ATP site. Ser14 serves as a coordination point for Mg(2+). Cys95 and Cys129 together coordinate [4Fe-4S] cluster. 180–181 (NR) serves as a coordination point for ATP.

The protein belongs to the NifH/BchL/ChlL family. Homodimer. Protochlorophyllide reductase is composed of three subunits; ChlL, ChlN and ChlB. [4Fe-4S] cluster serves as cofactor.

It localises to the plastid. The protein resides in the chloroplast. It catalyses the reaction chlorophyllide a + oxidized 2[4Fe-4S]-[ferredoxin] + 2 ADP + 2 phosphate = protochlorophyllide a + reduced 2[4Fe-4S]-[ferredoxin] + 2 ATP + 2 H2O. It functions in the pathway porphyrin-containing compound metabolism; chlorophyll biosynthesis (light-independent). Its function is as follows. Component of the dark-operative protochlorophyllide reductase (DPOR) that uses Mg-ATP and reduced ferredoxin to reduce ring D of protochlorophyllide (Pchlide) to form chlorophyllide a (Chlide). This reaction is light-independent. The L component serves as a unique electron donor to the NB-component of the complex, and binds Mg-ATP. The polypeptide is Light-independent protochlorophyllide reductase iron-sulfur ATP-binding protein (Pyropia yezoensis (Susabi-nori)).